Consider the following 71-residue polypeptide: Alpha-elapitoxin-Nn3a (71 aa).

Cystine bridges form between C3–C20, C14–C42, C26–C30, C46–C56, and C57–C62.

Belongs to the three-finger toxin family. Long-chain subfamily. Type II alpha-neurotoxin sub-subfamily. As to expression, expressed by the venom gland.

The protein localises to the secreted. In terms of biological role, nicotinic acetylcholine receptor antagonist. Binds to muscle nicotinic acetylcholine receptor (nAChR) and inhibits acetylcholine from binding to the receptor, thereby impairing neuromuscular transmission. Produces peripheral paralysis by blocking neuromuscular transmission at the postsynaptic site. Induces concentration-dependent inhibition of indirect twitches and abolishes contractile responses of tissues to exogenous acetylcholine and carbachol, in the chick biventer cervicis nerve-muscle preparation at 100-300 nM (in vitro). Prior incubation of tissues with Indian polyvalent antivenom (1 ml/0.6 mg) prevents the neurotoxic effects at 100 nM (in vitro). Addition of Indian polyvalent antivenom (1 ml/0.6 mg) at the t90 time point partially restores the neurotoxic effects (in vitro). Displays a reversible antagonism of concentration-response curves to carbachol, with a pA2 of 8.17 (in vitro). The polypeptide is Alpha-elapitoxin-Nn3a (Naja naja (Indian cobra)).